The sequence spans 357 residues: MGSLETERKIVGWAATDSTGHLAPYTYSLRDTGPEDVFIKVISCGVCHTDIHQIKNDLGMSHYPMVPGHEVVGEVVEVGSDVTRFKVGDVVGVGVIVGSCKNCHPCKSEIEQYCNKKIWSYNDVYTDGKPTQGGFAESMVVHQKFVVRIPDGMSPEQAAPLLCAGLTVYSPLKHFGLKQSGLRGGILGLGGVGHMGVKIAKAMGHHVTVISSSDKKREEAMEHLGADEYLVSSDVESMQKAADQLDYIIDTVPVVHPLEPYLSLLKLDGKLILMGVINAPLQFVTPMVMLGRKSITGSFIGSMKETEEMLEFCKEKGVASMIEVIKMDYINTAFERLEKNDVRYRFVVDVAGSKLIH.

Residue C47 coordinates Zn(2+). T49 provides a ligand contact to NADP(+). Zn(2+) contacts are provided by H69, E70, C100, C103, C106, C114, and C163. NADP(+) is bound by residues T167, 188–193, 211–216, T251, G275, and 298–300; these read GLGGVG, SSSDKK, and SFI.

The protein belongs to the zinc-containing alcohol dehydrogenase family. Homodimer. The cofactor is Zn(2+).

It carries out the reaction (E)-cinnamyl alcohol + NADP(+) = (E)-cinnamaldehyde + NADPH + H(+). The catalysed reaction is (E)-coniferol + NADP(+) = (E)-coniferaldehyde + NADPH + H(+). The enzyme catalyses (E)-sinapyl alcohol + NADP(+) = (E)-sinapaldehyde + NADPH + H(+). It catalyses the reaction (E)-4-coumaroyl alcohol + NADP(+) = (E)-4-coumaraldehyde + NADPH + H(+). It carries out the reaction (E)-caffeyl alcohol + NADP(+) = (E)-caffeyl aldehyde + NADPH + H(+). It functions in the pathway aromatic compound metabolism; phenylpropanoid biosynthesis. Functionally, involved in lignin biosynthesis. Catalyzes the final step specific for the production of lignin monomers. Catalyzes the NADPH-dependent reduction of coniferaldehyde, 5-hydroxyconiferaldehyde, sinapaldehyde, 4-coumaraldehyde and caffeyl aldehyde to their respective alcohols. This Populus deltoides (Eastern poplar) protein is Probable cinnamyl alcohol dehydrogenase.